Here is a 403-residue protein sequence, read N- to C-terminus: MAKLTVRDLDAKGKEVLMRVDFNVPLKDGEITNDARIVAALPTIKFLLDQGARLVLTSHLGRPKNEPDPAFSLKPVAARLSELLGKDVKFVSAAIGPEAEAARAAMKDGDVVLLENVRFYPGEKKNDPEFAKSLLGNATLFVNDAFGTAHRAHASTEGVTHFAEKSAMGFLIERELEYLEGKLENPEKPFVVIMGGAKVSDKIEVLSKLMEKADTFLIGGAMANTFLAAEGYDLGASKIEGDKLDLAREILAAAKAKGVKFLLPADVRVAMKFEDGAETFCTAPFAEGGKVPEGGMAIDIGDKAIEEFSAIIKDAKTVLWNGPMGVFEMDCFAKGTKEVAEALADSTAISIVGGGDSVTAAKKFKVQDKLSFCSTGGGASLELLEGKVLPGVGALTDKCCCGK.

Residues 21–23, R36, 59–62, R118, and R151 each bind substrate; these read DFN and HLGR. ATP contacts are provided by residues K202, E328, and 354 to 357; that span reads GGDS.

This sequence belongs to the phosphoglycerate kinase family. As to quaternary structure, monomer.

The protein resides in the cytoplasm. It catalyses the reaction (2R)-3-phosphoglycerate + ATP = (2R)-3-phospho-glyceroyl phosphate + ADP. It participates in carbohydrate degradation; glycolysis; pyruvate from D-glyceraldehyde 3-phosphate: step 2/5. In Akkermansia muciniphila (strain ATCC BAA-835 / DSM 22959 / JCM 33894 / BCRC 81048 / CCUG 64013 / CIP 107961 / Muc), this protein is Phosphoglycerate kinase.